The primary structure comprises 122 residues: Conotoxin flf14.2 (122 aa).

An N-terminal signal peptide occupies residues 1 to 22; the sequence is MGFRVLVLIVMVTTSALPFTFS. Positions 23-96 are excised as a propeptide; the sequence is EESGRSPFRP…AESPVGQKRW (74 aa). A disordered region spans residues 53-91; that stretch reads RADGQPSDMRQPEMRRPEMRRPEVRRPEVRQPEFAESPV. Residues 62–85 are compositionally biased toward basic and acidic residues; that stretch reads RQPEMRRPEMRRPEVRRPEVRQPE. Intrachain disulfides connect C101–C121 and C105–C117.

This sequence belongs to the conotoxin R superfamily. As to expression, expressed by the venom duct.

It localises to the secreted. This chain is Conotoxin flf14.2, found in Conus anabathrum floridanus (Florida cone).